The following is a 194-amino-acid chain: uncharacterized protein (194 aa).

This is an uncharacterized protein from Tomato ringspot virus (isolate raspberry) (ToRSV).